We begin with the raw amino-acid sequence, 387 residues long: 3-ketoacyl-CoA thiolase (387 aa).

C91 serves as the catalytic Acyl-thioester intermediate. Catalysis depends on proton acceptor residues H343 and C373.

It belongs to the thiolase-like superfamily. Thiolase family. Heterotetramer of two alpha chains (FadB) and two beta chains (FadA).

It localises to the cytoplasm. The enzyme catalyses an acyl-CoA + acetyl-CoA = a 3-oxoacyl-CoA + CoA. Its pathway is lipid metabolism; fatty acid beta-oxidation. In terms of biological role, catalyzes the final step of fatty acid oxidation in which acetyl-CoA is released and the CoA ester of a fatty acid two carbons shorter is formed. This Aeromonas hydrophila subsp. hydrophila (strain ATCC 7966 / DSM 30187 / BCRC 13018 / CCUG 14551 / JCM 1027 / KCTC 2358 / NCIMB 9240 / NCTC 8049) protein is 3-ketoacyl-CoA thiolase.